Consider the following 460-residue polypeptide: RING finger protein DG17 (460 aa).

The RING-type zinc-finger motif lies at 27-67; it reads CPICFEFIYKKQIYQCKSGHHACKECWEKSLETKKECMTCK. 2 consecutive TRAF-type zinc fingers follow at residues 141–194 and 196–253; these read SHLI…KKEL and THYK…SELQ. Residues 269–294 adopt a coiled-coil conformation; it reads IEKLTNQVGQSKKTHDELLKKIEDLS. The 129-residue stretch at 320-448 folds into the MATH domain; the sequence is GYRNKWIISN…DDKLIIEIYI (129 aa).

Belongs to the TNF receptor-associated factor family. A subfamily.

Its subcellular location is the cytoplasm. Its function is as follows. Probable adapter protein and signal transducer that links members of the tumor necrosis factor receptor family to different signaling pathways by association with the receptor cytoplasmic domain and kinases. The chain is RING finger protein DG17 (zfaA) from Dictyostelium discoideum (Social amoeba).